Consider the following 555-residue polypeptide: Dihydroxy-acid dehydratase (555 aa).

Residue Asp78 participates in Mg(2+) binding. Cys119 is a [2Fe-2S] cluster binding site. Mg(2+) contacts are provided by Asp120 and Lys121. Position 121 is an N6-carboxylysine (Lys121). Cys191 is a binding site for [2Fe-2S] cluster. Position 444 (Glu444) interacts with Mg(2+). Ser470 (proton acceptor) is an active-site residue.

It belongs to the IlvD/Edd family. In terms of assembly, homodimer. Requires [2Fe-2S] cluster as cofactor. Mg(2+) serves as cofactor.

It carries out the reaction (2R)-2,3-dihydroxy-3-methylbutanoate = 3-methyl-2-oxobutanoate + H2O. The enzyme catalyses (2R,3R)-2,3-dihydroxy-3-methylpentanoate = (S)-3-methyl-2-oxopentanoate + H2O. It functions in the pathway amino-acid biosynthesis; L-isoleucine biosynthesis; L-isoleucine from 2-oxobutanoate: step 3/4. Its pathway is amino-acid biosynthesis; L-valine biosynthesis; L-valine from pyruvate: step 3/4. Its function is as follows. Functions in the biosynthesis of branched-chain amino acids. Catalyzes the dehydration of (2R,3R)-2,3-dihydroxy-3-methylpentanoate (2,3-dihydroxy-3-methylvalerate) into 2-oxo-3-methylpentanoate (2-oxo-3-methylvalerate) and of (2R)-2,3-dihydroxy-3-methylbutanoate (2,3-dihydroxyisovalerate) into 2-oxo-3-methylbutanoate (2-oxoisovalerate), the penultimate precursor to L-isoleucine and L-valine, respectively. This Oleidesulfovibrio alaskensis (strain ATCC BAA-1058 / DSM 17464 / G20) (Desulfovibrio alaskensis) protein is Dihydroxy-acid dehydratase.